Consider the following 160-residue polypeptide: Putative pre-16S rRNA nuclease (160 aa).

It belongs to the YqgF nuclease family.

The protein localises to the cytoplasm. In terms of biological role, could be a nuclease involved in processing of the 5'-end of pre-16S rRNA. The sequence is that of Putative pre-16S rRNA nuclease from Rhodopseudomonas palustris (strain BisB5).